The primary structure comprises 438 residues: Glutamyl-tRNA reductase (438 aa).

Substrate contacts are provided by residues 49–52, Ser-109, 114–116, and Gln-120; these read TCNR and EQQ. Cys-50 functions as the Nucleophile in the catalytic mechanism. An NADP(+)-binding site is contributed by 191-196; the sequence is GAGAMA.

It belongs to the glutamyl-tRNA reductase family. As to quaternary structure, homodimer.

It catalyses the reaction (S)-4-amino-5-oxopentanoate + tRNA(Glu) + NADP(+) = L-glutamyl-tRNA(Glu) + NADPH + H(+). The protein operates within porphyrin-containing compound metabolism; protoporphyrin-IX biosynthesis; 5-aminolevulinate from L-glutamyl-tRNA(Glu): step 1/2. Its function is as follows. Catalyzes the NADPH-dependent reduction of glutamyl-tRNA(Glu) to glutamate 1-semialdehyde (GSA). In Corynebacterium diphtheriae (strain ATCC 700971 / NCTC 13129 / Biotype gravis), this protein is Glutamyl-tRNA reductase.